We begin with the raw amino-acid sequence, 435 residues long: Elongation factor 1-alpha (435 aa).

One can recognise a tr-type G domain in the interval 6 to 231 (KVHINLVVIG…DALEPPKRPV (226 aa)). Residues 15–22 (GHVDSGKS) are G1. 15-22 (GHVDSGKS) lines the GTP pocket. Positions 71-75 (GITID) are G2. Positions 92–95 (DAPG) are G3. GTP is bound by residues 92-96 (DAPGH) and 154-157 (NKMD). Positions 154–157 (NKMD) are G4. Residues 195–197 (SGF) form a G5 region.

It belongs to the TRAFAC class translation factor GTPase superfamily. Classic translation factor GTPase family. EF-Tu/EF-1A subfamily.

It localises to the cytoplasm. Functionally, this protein promotes the GTP-dependent binding of aminoacyl-tRNA to the A-site of ribosomes during protein biosynthesis. This Tetrahymena pyriformis protein is Elongation factor 1-alpha.